We begin with the raw amino-acid sequence, 312 residues long: ADP-L-glycero-D-manno-heptose-6-epimerase (312 aa).

NADP(+)-binding positions include 10–11, 31–32, Lys38, Lys53, 75–79, and Asn92; these read FI, DN, and EGACS. Tyr140 (proton acceptor) is an active-site residue. Lys144 is a binding site for NADP(+). Residue Asn169 participates in substrate binding. Val170 and Lys178 together coordinate NADP(+). The active-site Proton acceptor is the Lys178. Substrate contacts are provided by residues Ser180, His187, 201-204, Arg209, and Tyr274; that span reads FEGS.

Belongs to the NAD(P)-dependent epimerase/dehydratase family. HldD subfamily. As to quaternary structure, homopentamer. Requires NADP(+) as cofactor.

The enzyme catalyses ADP-D-glycero-beta-D-manno-heptose = ADP-L-glycero-beta-D-manno-heptose. The protein operates within nucleotide-sugar biosynthesis; ADP-L-glycero-beta-D-manno-heptose biosynthesis; ADP-L-glycero-beta-D-manno-heptose from D-glycero-beta-D-manno-heptose 7-phosphate: step 4/4. Functionally, catalyzes the interconversion between ADP-D-glycero-beta-D-manno-heptose and ADP-L-glycero-beta-D-manno-heptose via an epimerization at carbon 6 of the heptose. This is ADP-L-glycero-D-manno-heptose-6-epimerase from Proteus mirabilis (strain HI4320).